A 190-amino-acid polypeptide reads, in one-letter code: FMRFamide-related peptides (190 aa).

An N-terminal signal peptide occupies residues 1 to 21 (MSCSRTVALLAALWLVVGATS). The propeptide occupies 22-33 (SPVRRSPDLEAR). Phe-45 bears the Phenylalanine amide mark. The propeptide occupies 69–104 (GNSFLRFGRSQPLTLSTDDLVSLLRAYEEDYDTPMT). The residue at position 113 (Phe-113) is a Phenylalanine amide. A propeptide spanning residues 116–150 (DPNFIRLGRSADDDKSAFEQNSELVVSGYPQRKSR) is cleaved from the precursor. Position 158 is a leucine amide (Leu-158). Positions 160-190 (RDSEEVNENEFEETEESRRKRSADSCHDCQS) are excised as a propeptide. Positions 161–190 (DSEEVNENEFEETEESRRKRSADSCHDCQS) are disordered. Acidic residues predominate over residues 164–174 (EVNENEFEETE). A compositionally biased stretch (basic and acidic residues) spans 175–190 (ESRRKRSADSCHDCQS).

Belongs to the FARP (FMRFamide related peptide) family. RFamide 1: Expressed in corpora cardiaca (CC), corpora allata (CA), antennal lobe (AL) and gnathal ganglion (GNG) (at protein level). Expression in AL detected in most animals, in CC, CA and in GNG in some animals (at protein level). RFamide precursor-related peptide 2: Expressed in corpora cardiaca (CC), corpora allata (CA), antennal lobe (AL) and gnathal ganglion (GNG) (at protein level). Expression in AL detected in some animals, expression in CC, CA and GNG in few animals (at protein level). RFamide 3: Expressed in corpora cardiaca (CC), corpora allata (CA), antennal lobe (AL) and gnathal ganglion (GNG) (at protein level). Expression in AL detected in all animals, in CC, CA and GNG in most animals (at protein level). RFamide 5: Expressed in corpora cardiaca (CC), corpora allata (CA), antennal lobe (AL) and gnathal ganglion (GNG) (at protein level). Expression in AL detected in all animals, in CC, CA and in GNG in some animals (at protein level).

It localises to the secreted. Its function is as follows. In insects, FMRFamide and related peptides have modulatory actions at skeletal neuromuscular junctions, and peptides that are immunologically related to FMRFamide are released into the circulation from neurohemal organs. This chain is FMRFamide-related peptides, found in Agrotis ipsilon (Black cutworm moth).